A 507-amino-acid chain; its full sequence is Phosphoenolpyruvate carboxylase (507 aa).

Residues 1 to 25 (MHKIDRKIPNIMGTQHPDNAGVPFF) form a disordered region.

The protein belongs to the PEPCase type 2 family. As to quaternary structure, homotetramer. It depends on Mg(2+) as a cofactor.

It catalyses the reaction oxaloacetate + phosphate = phosphoenolpyruvate + hydrogencarbonate. Its function is as follows. Catalyzes the irreversible beta-carboxylation of phosphoenolpyruvate (PEP) to form oxaloacetate (OAA), a four-carbon dicarboxylic acid source for the tricarboxylic acid cycle. This is Phosphoenolpyruvate carboxylase from Oenococcus oeni (strain ATCC BAA-331 / PSU-1).